We begin with the raw amino-acid sequence, 150 residues long: Large ribosomal subunit protein bL9 (150 aa).

This sequence belongs to the bacterial ribosomal protein bL9 family.

In terms of biological role, binds to the 23S rRNA. This is Large ribosomal subunit protein bL9 from Pseudoalteromonas atlantica (strain T6c / ATCC BAA-1087).